The sequence spans 399 residues: Phosphoglycerate kinase (399 aa).

Substrate-binding positions include 22-24 (DFN), Arg-38, 61-64 (HLGR), Arg-120, and Arg-153. ATP-binding positions include Lys-204, Glu-326, and 352 to 355 (GGDT).

Belongs to the phosphoglycerate kinase family. Monomer.

It localises to the cytoplasm. It carries out the reaction (2R)-3-phosphoglycerate + ATP = (2R)-3-phospho-glyceroyl phosphate + ADP. The protein operates within carbohydrate degradation; glycolysis; pyruvate from D-glyceraldehyde 3-phosphate: step 2/5. This is Phosphoglycerate kinase from Geotalea uraniireducens (strain Rf4) (Geobacter uraniireducens).